A 225-amino-acid chain; its full sequence is tRNA (guanine-N(1)-)-methyltransferase (225 aa).

Residues G112 and 132 to 137 (IGDYVL) contribute to the S-adenosyl-L-methionine site.

It belongs to the RNA methyltransferase TrmD family. In terms of assembly, homodimer.

The protein resides in the cytoplasm. The catalysed reaction is guanosine(37) in tRNA + S-adenosyl-L-methionine = N(1)-methylguanosine(37) in tRNA + S-adenosyl-L-homocysteine + H(+). Functionally, specifically methylates guanosine-37 in various tRNAs. The polypeptide is tRNA (guanine-N(1)-)-methyltransferase (Bacteroides thetaiotaomicron (strain ATCC 29148 / DSM 2079 / JCM 5827 / CCUG 10774 / NCTC 10582 / VPI-5482 / E50)).